The primary structure comprises 3432 residues: Genome polyprotein (3432 aa).

Residues 2–15 are interaction with host EXOC1; it reads TKKPGGPGKNRAIN. Over 2-109 the chain is Cytoplasmic; it reads TKKPGGPGKN…RKQNKRGGNE (108 aa). A hydrophobic; homodimerization of capsid protein C region spans residues 37-72; the sequence is LLDGRGPVRFVLALITFFKFTALAPTKALLGRWKAV. A propeptide spans 106 to 127 (ER anchor for the capsid protein C, removed in mature form by serine protease NS3); it reads GGNEGSIMWLASLAVVIACAGA. A helical membrane pass occupies residues 110-130; that stretch reads GSIMWLASLAVVIACAGAMKL. Topologically, residues 131–253 are extracellular; that stretch reads SNFQGKLLMT…ATRYLMKTEN (123 aa). Asn142 carries an N-linked (GlcNAc...) asparagine; by host glycan. A helical membrane pass occupies residues 254-274; it reads WIIRNPGYAFLAAVLGWMLGS. Over 275–279 the chain is Cytoplasmic; the sequence is NNGQR. A helical transmembrane segment spans residues 280-294; the sequence is VVFTILLLLVAPAYS. Residues 295–746 are Extracellular-facing; it reads FNCLGMGNRD…QVFGGAFRTL (452 aa). 6 disulfides stabilise this stretch: Cys297–Cys324, Cys354–Cys410, Cys354–Cys415, Cys368–Cys399, Cys386–Cys410, and Cys386–Cys415. The tract at residues 392 to 405 is fusion peptide; that stretch reads DRGWGNGCGLFGKG. The N-linked (GlcNAc...) asparagine; by host glycan is linked to Asn448. 2 cysteine pairs are disulfide-bonded: Cys484-Cys581 and Cys598-Cys629. A helical transmembrane segment spans residues 747-767; that stretch reads FGGMSWITQGLMGALLLWMGV. The Cytoplasmic portion of the chain corresponds to 768-773; that stretch reads NARDRS. The helical transmembrane segment at 774-794 threads the bilayer; it reads IALAFLATGGVLVFLATNVHA. Residues 795 to 1219 lie on the Extracellular side of the membrane; the sequence is DTGCAIDITR…AFAEANSGGD (425 aa). 6 cysteine pairs are disulfide-bonded: Cys798–Cys809, Cys849–Cys937, Cys973–Cys1017, Cys1074–Cys1123, Cys1085–Cys1106, and Cys1107–Cys1110. Residues Asn924 and Asn1001 are each glycosylated (N-linked (GlcNAc...) asparagine; by host). A helical membrane pass occupies residues 1220–1240; it reads VLHLALIAVFKIQPAFLVMNM. The Cytoplasmic segment spans residues 1241-1250; the sequence is LSTRWTNQEN. Residues 1251–1271 form a helical membrane-spanning segment; sequence VVLVLGAAFFQLASVDLQIGV. A topological domain (lumenal) is located at residue His1272. Residues 1273–1293 traverse the membrane as a helical segment; sequence GILNAAAIAWMIVRAITFPTT. The Cytoplasmic portion of the chain corresponds to 1294 to 1309; the sequence is SSVTMPVLALLTPGMR. Residues 1310 to 1330 traverse the membrane as a helical segment; that stretch reads ALYLDTYRIILLVIGICSLLH. The Lumenal portion of the chain corresponds to 1331 to 1341; it reads ERKKTMAKKKG. Residues 1342–1362 form a helical membrane-spanning segment; sequence AVLLGLALTSTGWFSPTTIAA. At 1363-1374 the chain is on the cytoplasmic side; it reads GLMVCNPNKKRG. The chain crosses the membrane as a helical span at residues 1375–1395; that stretch reads WPATEFLSAVGLMFAIVGGLA. Residues 1396–1398 are Lumenal-facing; the sequence is ELD. Residues 1399–1419 form a helical membrane-spanning segment; the sequence is IESMSIPFMLAGLMAVSYVVS. Residues 1420-1476 are Cytoplasmic-facing; sequence GKATDMWLERAADISWEMDAAITGSSRRLDVKLDDDGDFHLIDDPGVPWKVWVLRMS. Residues 1427 to 1466 form an interacts with and activates NS3 protease region; the sequence is LERAADISWEMDAAITGSSRRLDVKLDDDGDFHLIDDPGV. The helical intramembrane region spans 1477–1497; sequence CIGLAALTPWAIVPAAFGYWL. The Cytoplasmic portion of the chain corresponds to 1498-2173; it reads TLKTTKRGGV…RMALEELPDA (676 aa). In terms of domain architecture, Peptidase S7 spans 1505–1682; the sequence is GGVFWDTPSP…DRQEEPVPEA (178 aa). Active-site charge relay system; for serine protease NS3 activity residues include His1555, Asp1579, and Ser1639. In terms of domain architecture, Helicase ATP-binding spans 1685-1841; it reads PNMLRKRQMT…DSNAPIHDLQ (157 aa). Residues 1689–1692 are important for RNA-binding; sequence RKRQ. 1698-1705 provides a ligand contact to ATP; it reads LHPGSGKT. Residues 1789 to 1792 carry the DEAH box motif; that stretch reads DEAH. The 166-residue stretch at 1852-2017 folds into the Helicase C-terminal domain; it reads GYEWITEYAG…GLVAQLYGPE (166 aa). Residue Lys1893 is modified to N6-acetyllysine; by host. The interval 1950 to 1972 is disordered; sequence NPSPITSASAAQRRGRVGRNPNQ. Positions 2168 to 2172 are regulates the ATPase activity of NS3 helicase; that stretch reads EELPD. The chain crosses the membrane as a helical span at residues 2174–2194; it reads LETITLIVAITVMTGGFFLLM. At 2195 to 2199 the chain is on the lumenal side; sequence MQRKG. Residues 2200-2220 constitute an intramembrane region (helical); sequence IGKMGLGALVLTLATFFLWAA. Position 2221 (Glu2221) is a topological domain, lumenal. A helical transmembrane segment spans residues 2222–2242; it reads VPGTKIAGTLLIALLLMVVLI. Residues 2243–2257 are Cytoplasmic-facing; sequence PEPEKQRSQTDNQLA. A helical transmembrane segment spans residues 2258–2278; it reads VFLICVLTVVGVVAANEYGML. Residues 2279–2311 lie on the Lumenal side of the membrane; that stretch reads EKTKADLKSMFGGKTQASGLTGLPSMALDLRPA. The segment at residues 2312–2332 is an intramembrane region (helical); sequence TAWALYGGSTVVLTPLLKHLI. Residues 2333-2368 lie on the Lumenal side of the membrane; sequence TSEYVTTSLASINSQAGSLFVLPRGVPFTDLDLTVG. The chain crosses the membrane as a helical span at residues 2369-2389; that stretch reads LVFLGCWGQITLTTFLTAMVL. Residues 2390–2444 are Cytoplasmic-facing; sequence ATLHYGYMLPGWQAEALRAAQRRTAAGIMKNAVVDGMVATDVPELERTTPLMQKK. A helical transmembrane segment spans residues 2445–2465; sequence VGQVLLIGVSVAAFLVNPNVT. Residues 2466–2469 lie on the Lumenal side of the membrane; it reads TVRE. A helical membrane pass occupies residues 2470–2490; it reads AGVLVTAATLTLWDNGASAVW. Residues 2491–3432 are Cytoplasmic-facing; it reads NSTTATGLCH…DVLIQEDRVI (942 aa). The mRNA cap 0-1 NS5-type MT domain maps to 2528–2793; it reads GRPGGRTLGE…DVNLGSGTRA (266 aa). S-adenosyl-L-methionine is bound at residue Ser2583. Ser2583 bears the Phosphoserine mark. Lys2588 acts as the For 2'-O-MTase activity in catalysis. S-adenosyl-L-methionine-binding residues include Gly2613, Trp2614, Thr2631, Lys2632, Asp2658, and Val2659. Asp2673 serves as the catalytic For 2'-O-MTase activity. Ile2674 provides a ligand contact to S-adenosyl-L-methionine. Residues Lys2709 and Glu2745 each act as for 2'-O-MTase activity in the active site. Residue Tyr2747 participates in S-adenosyl-L-methionine binding. Zn(2+)-binding residues include Glu2967, His2971, Cys2976, and Cys2979. One can recognise a RdRp catalytic domain in the interval 3057–3209; that stretch reads GKMYADDTAG…KPLDDRFATA (153 aa). Positions 3244, 3260, and 3379 each coordinate Zn(2+).

This sequence in the N-terminal section; belongs to the class I-like SAM-binding methyltransferase superfamily. mRNA cap 0-1 NS5-type methyltransferase family. Homodimer. Interacts (via N-terminus) with host EXOC1 (via C-terminus); this interaction results in EXOC1 degradation through the proteasome degradation pathway. As to quaternary structure, forms heterodimers with envelope protein E in the endoplasmic reticulum and Golgi. In terms of assembly, homodimer; in the endoplasmic reticulum and Golgi. Interacts with protein prM. Interacts with non-structural protein 1. Interacts with host HSPA5. Homodimer; Homohexamer when secreted. Interacts with envelope protein E. NS1 interacts with NS4B. Interacts with host complement protein CFH; this interaction leads to the degradation of C3. As to quaternary structure, interacts (via N-terminus) with serine protease NS3. In terms of assembly, forms a heterodimer with serine protease NS3. May form homooligomers. Forms a heterodimer with NS2B. Interacts with non-structural protein 2A (via N-terminus). Interacts with NS4B. Interacts with unphosphorylated RNA-directed RNA polymerase NS5; this interaction stimulates RNA-directed RNA polymerase NS5 guanylyltransferase activity. Interacts with host ILF2. As to quaternary structure, interacts with serine protease NS3. In terms of assembly, homodimer. Interacts with host STAT2; this interaction inhibits the phosphorylation of the latter, and, when all viral proteins are present (polyprotein), targets STAT2 for degradation. Interacts with serine protease NS3. Requires Mn(2+) as cofactor. Mg(2+) is required as a cofactor. Specific enzymatic cleavages in vivo yield mature proteins. Cleavages in the lumen of endoplasmic reticulum are performed by host signal peptidase, whereas cleavages in the cytoplasmic side are performed by serine protease NS3. Signal cleavage at the 2K-4B site requires a prior NS3 protease-mediated cleavage at the 4A-2K site. Post-translationally, cleaved in post-Golgi vesicles by a host furin, releasing the mature small envelope protein M, and peptide pr. This cleavage is incomplete as up to 30% of viral particles still carry uncleaved prM. In terms of processing, N-glycosylated. N-glycosylated. The excreted form is glycosylated and this is required for efficient secretion of the protein from infected cells. Post-translationally, acetylated by host KAT5. Acetylation modulates NS3 RNA-binding and unwinding activities and plays an important positive role for viral replication. In terms of processing, phosphorylated on serines residues. This phosphorylation may trigger NS5 nuclear localization.

It is found in the virion. The protein localises to the host nucleus. It localises to the host cytoplasm. Its subcellular location is the host perinuclear region. The protein resides in the secreted. It is found in the virion membrane. The protein localises to the host endoplasmic reticulum membrane. It localises to the host cell surface. It catalyses the reaction Selective hydrolysis of -Xaa-Xaa-|-Yaa- bonds in which each of the Xaa can be either Arg or Lys and Yaa can be either Ser or Ala.. It carries out the reaction RNA(n) + a ribonucleoside 5'-triphosphate = RNA(n+1) + diphosphate. The catalysed reaction is a ribonucleoside 5'-triphosphate + H2O = a ribonucleoside 5'-diphosphate + phosphate + H(+). The enzyme catalyses ATP + H2O = ADP + phosphate + H(+). It catalyses the reaction a 5'-end (5'-triphosphoguanosine)-ribonucleoside in mRNA + S-adenosyl-L-methionine = a 5'-end (N(7)-methyl 5'-triphosphoguanosine)-ribonucleoside in mRNA + S-adenosyl-L-homocysteine. It carries out the reaction a 5'-end (N(7)-methyl 5'-triphosphoguanosine)-ribonucleoside in mRNA + S-adenosyl-L-methionine = a 5'-end (N(7)-methyl 5'-triphosphoguanosine)-(2'-O-methyl-ribonucleoside) in mRNA + S-adenosyl-L-homocysteine + H(+). Plays a role in virus budding by binding to the cell membrane and gathering the viral RNA into a nucleocapsid that forms the core of a mature virus particle. During virus entry, may induce genome penetration into the host cytoplasm after hemifusion induced by the surface proteins. Can migrate to the cell nucleus where it modulates host functions. Overcomes the anti-viral effects of host EXOC1 by sequestering and degrading the latter through the proteasome degradation pathway. Functionally, inhibits RNA silencing by interfering with host Dicer. In terms of biological role, prevents premature fusion activity of envelope proteins in trans-Golgi by binding to envelope protein E at pH6.0. After virion release in extracellular space, gets dissociated from E dimers. Its function is as follows. Acts as a chaperone for envelope protein E during intracellular virion assembly by masking and inactivating envelope protein E fusion peptide. prM is the only viral peptide matured by host furin in the trans-Golgi network probably to avoid catastrophic activation of the viral fusion activity in acidic Golgi compartment prior to virion release. prM-E cleavage is inefficient, and many virions are only partially matured. These uncleaved prM would play a role in immune evasion. May play a role in virus budding. Exerts cytotoxic effects by activating a mitochondrial apoptotic pathway through M ectodomain. May display a viroporin activity. Functionally, binds to host cell surface receptor and mediates fusion between viral and cellular membranes. Efficient virus attachment to cell is, at least in part, mediated by host HSPA5. Envelope protein is synthesized in the endoplasmic reticulum in the form of heterodimer with protein prM. They play a role in virion budding in the ER, and the newly formed immature particle is covered with 60 spikes composed of heterodimer between precursor prM and envelope protein E. The virion is transported to the Golgi apparatus where the low pH causes dissociation of PrM-E heterodimers and formation of E homodimers. prM-E cleavage is inefficient, and many virions are only partially matured. These uncleaved prM would play a role in immune evasion. In terms of biological role, involved in immune evasion, pathogenesis and viral replication. Once cleaved off the polyprotein, is targeted to three destinations: the viral replication cycle, the plasma membrane and the extracellular compartment. Essential for viral replication. Required for formation of the replication complex and recruitment of other non-structural proteins to the ER-derived membrane structures. Excreted as a hexameric lipoparticle that plays a role against host immune response. Antagonizing the complement function. Binds to the host macrophages and dendritic cells. Inhibits signal transduction originating from Toll-like receptor 3 (TLR3). Its function is as follows. Component of the viral RNA replication complex that functions in virion assembly and antagonizes the host alpha/beta interferon antiviral response. Required cofactor for the serine protease function of NS3. May have membrane-destabilizing activity and form viroporins. Functionally, displays three enzymatic activities: serine protease, NTPase and RNA helicase. NS3 serine protease, in association with NS2B, performs its autocleavage and cleaves the polyprotein at dibasic sites in the cytoplasm: C-prM, NS2A-NS2B, NS2B-NS3, NS3-NS4A, NS4A-2K and NS4B-NS5. NS3 RNA helicase binds RNA and unwinds dsRNA in the 3' to 5' direction. In terms of biological role, regulates the ATPase activity of the NS3 helicase activity. NS4A allows NS3 helicase to conserve energy during unwinding. Its function is as follows. Functions as a signal peptide for NS4B and is required for the interferon antagonism activity of the latter. Induces the formation of ER-derived membrane vesicles where the viral replication takes place. Inhibits interferon (IFN)-induced host STAT1 phosphorylation and nuclear translocation, thereby preventing the establishment of cellular antiviral state by blocking the IFN-alpha/beta pathway. Inhibits STAT2 translocation in the nucleus after IFN-alpha treatment. Functionally, replicates the viral (+) and (-) RNA genome. Performs the capping of genomes in the cytoplasm. NS5 methylates viral RNA cap at guanine N-7 and ribose 2'-O positions. Besides its role in RNA genome replication, also prevents the establishment of cellular antiviral state by blocking the interferon-alpha/beta (IFN-alpha/beta) signaling pathway. Inhibits host TYK2 and STAT2 phosphorylation, thereby preventing activation of JAK-STAT signaling pathway. The polypeptide is Genome polyprotein (Ardeidae (herons)).